The chain runs to 213 residues: Holliday junction resolvase RecU (213 aa).

Mg(2+)-binding residues include T99, D101, E114, and Q133.

The protein belongs to the RecU family. Requires Mg(2+) as cofactor.

The protein localises to the cytoplasm. It catalyses the reaction Endonucleolytic cleavage at a junction such as a reciprocal single-stranded crossover between two homologous DNA duplexes (Holliday junction).. Its function is as follows. Endonuclease that resolves Holliday junction intermediates in genetic recombination. Cleaves mobile four-strand junctions by introducing symmetrical nicks in paired strands. Promotes annealing of linear ssDNA with homologous dsDNA. Required for DNA repair, homologous recombination and chromosome segregation. The protein is Holliday junction resolvase RecU of Lactococcus lactis subsp. lactis (strain IL1403) (Streptococcus lactis).